The primary structure comprises 504 residues: L-carnitine/gamma-butyrobetaine antiporter (504 aa).

12 helical membrane-spanning segments follow: residues 10 to 30, 51 to 71, 92 to 112, 143 to 163, 195 to 215, 231 to 251, 263 to 283, 316 to 336, 347 to 367, 398 to 418, 446 to 466, and 475 to 495; these read IEPKVFFPPLIIVGILCWLTV, WGWAFEWYMVVMLFGWFWLVF, IFMMFASCTSAAVLFWGSIEI, GPLPWATYSFLSVAFAYFFFV, FYLVALIFAMGTSLGLATPLV, LDAIIITCWIILNAICVACGL, SYLSFLMLGWVFIVSGASFIM, WTVFYWAWWVIYAIQMSIFLA, LCFGMVLGLTASTWILWTVLG, WAALPLSTATMWGFFILCFIA, LLVRIGWSILVGIIGIVLLAL, and AIIAGGCPLFFVNIMVTLSFI.

It belongs to the BCCT transporter (TC 2.A.15) family. CaiT subfamily. Homotrimer.

It localises to the cell inner membrane. It catalyses the reaction 4-(trimethylamino)butanoate(in) + (R)-carnitine(out) = 4-(trimethylamino)butanoate(out) + (R)-carnitine(in). The protein operates within amine and polyamine metabolism; carnitine metabolism. Functionally, catalyzes the exchange of L-carnitine for gamma-butyrobetaine. The chain is L-carnitine/gamma-butyrobetaine antiporter from Escherichia coli (strain ATCC 8739 / DSM 1576 / NBRC 3972 / NCIMB 8545 / WDCM 00012 / Crooks).